Consider the following 382-residue polypeptide: Apolipoprotein A-IV (382 aa).

Positions 1-20 (MFLKAVVLTLSLVAVTGAQA) are cleaved as a signal peptide. Tandem repeats lie at residues 33-54 (DYFS…KSEL), 60-81 (ALFQ…KKLV), 82-103 (PFAT…EEIR), 115-136 (PHAD…QRLG), 137-158 (PYAE…NQLT), 159-180 (AHAQ…ASLT), 181-202 (PYAD…GHLT), 203-224 (PYAD…RSLA), 225-246 (PYAQ…FQMK), 247-268 (KNAE…QKLV), 269-286 (PVAE…EELQ), 287-308 (KSLA…RNVG), and 309-330 (PYGE…QKLG). A 13 X 22 AA approximate tandem repeats region spans residues 33–330 (DYFSQLSNNA…QVEELRQKLG (298 aa)).

The protein belongs to the apolipoprotein A1/A4/E family. In terms of assembly, homodimer. In terms of processing, phosphorylation sites are present in the extracellular medium.

The protein localises to the secreted. May have a role in chylomicrons and VLDL secretion and catabolism. Required for efficient activation of lipoprotein lipase by ApoC-II; potent activator of LCAT. Apoa-IV is a major component of HDL and chylomicrons. This chain is Apolipoprotein A-IV (APOA4), found in Neomonachus schauinslandi (Hawaiian monk seal).